The primary structure comprises 238 residues: Ribonuclease PH (238 aa).

Phosphate contacts are provided by residues R86 and 124–126; that span reads GTR.

Belongs to the RNase PH family. As to quaternary structure, homohexameric ring arranged as a trimer of dimers.

It catalyses the reaction tRNA(n+1) + phosphate = tRNA(n) + a ribonucleoside 5'-diphosphate. Its function is as follows. Phosphorolytic 3'-5' exoribonuclease that plays an important role in tRNA 3'-end maturation. Removes nucleotide residues following the 3'-CCA terminus of tRNAs; can also add nucleotides to the ends of RNA molecules by using nucleoside diphosphates as substrates, but this may not be physiologically important. Probably plays a role in initiation of 16S rRNA degradation (leading to ribosome degradation) during starvation. This Vibrio vulnificus (strain CMCP6) protein is Ribonuclease PH.